The chain runs to 302 residues: Oxygen-dependent coproporphyrinogen-III oxidase (302 aa).

Serine 94 lines the substrate pocket. A divalent metal cation is bound by residues histidine 98 and histidine 108. Residue histidine 108 is the Proton donor of the active site. Position 110-112 (110-112) interacts with substrate; it reads NVR. A divalent metal cation-binding residues include histidine 147 and histidine 177. The important for dimerization stretch occupies residues 242–277; it reads YVEFNLVWDRGTLFGLQTGGRTESILMSMPPLVRWE. 260–262 contacts substrate; that stretch reads GGR.

The protein belongs to the aerobic coproporphyrinogen-III oxidase family. As to quaternary structure, homodimer. Requires a divalent metal cation as cofactor.

It is found in the cytoplasm. The catalysed reaction is coproporphyrinogen III + O2 + 2 H(+) = protoporphyrinogen IX + 2 CO2 + 2 H2O. It functions in the pathway porphyrin-containing compound metabolism; protoporphyrin-IX biosynthesis; protoporphyrinogen-IX from coproporphyrinogen-III (O2 route): step 1/1. Involved in the heme biosynthesis. Catalyzes the aerobic oxidative decarboxylation of propionate groups of rings A and B of coproporphyrinogen-III to yield the vinyl groups in protoporphyrinogen-IX. The protein is Oxygen-dependent coproporphyrinogen-III oxidase of Erwinia tasmaniensis (strain DSM 17950 / CFBP 7177 / CIP 109463 / NCPPB 4357 / Et1/99).